The chain runs to 2146 residues: Conidial pigment polyketide synthase alb1 (2146 aa).

Positions 8-244 are N-terminal acylcarrier protein transacylase domain (SAT); that stretch reads YLFGDQTISC…KAPGVSGPYH (237 aa). The region spanning 375–806 is the Ketosynthase family 3 (KS3) domain; that stretch reads RSKIAIIGMS…GGNTALLMED (432 aa). Active-site for beta-ketoacyl synthase activity residues include Cys547, His682, and His724. The interval 911–1232 is malonyl-CoA:ACP transacylase (MAT) domain; sequence GFVFTGQGAQ…LSTLHLAGVE (322 aa). The active-site For acyl/malonyl transferase activity is the Ser1001. The product template (PT) domain stretch occupies residues 1290–1602; it reads TTAAQKIVEC…ARKILDTVLP (313 aa). Residues 1294–1427 are N-terminal hotdog fold; that stretch reads QKIVECREDG…VKLFNCAERE (134 aa). In terms of domain architecture, PKS/mFAS DH spans 1294–1598; sequence QKIVECREDG…FQALARKILD (305 aa). His1326 acts as the Proton acceptor; for dehydratase activity in catalysis. The interval 1453 to 1598 is C-terminal hotdog fold; it reads AHRMQRGMVY…FQALARKILD (146 aa). Asp1511 functions as the Proton donor; for dehydratase activity in the catalytic mechanism. The tract at residues 1611-1644 is disordered; that stretch reads GAPAPAPARPIGEKKAPPPIKVTGPPKPNPSNAR. The segment covering 1627-1639 has biased composition (pro residues); sequence PPPIKVTGPPKPN. Residues 1647 to 1721 form the Carrier 1 domain; the sequence is SPVVARALEI…DFKAYLAEKG (75 aa). Ser1681 bears the O-(pantetheine 4'-phosphoryl)serine mark. Residues 1724–1769 form a disordered region; sequence DSSSPEPSSEPESKFSFNSDASSEASSGLTTPGITSPVKHEAPKGG. Residues 1738-1750 show a composition bias toward low complexity; it reads FSFNSDASSEASS. The Carrier 2 domain occupies 1768-1845; that stretch reads GGQNKVWKSI…AVQAALDLKP (78 aa). Residue Ser1805 is modified to O-(pantetheine 4'-phosphoryl)serine. The interval 1892–2019 is claisen cyclase domain; the sequence is KLFMFPDGSG…SIGLFGDGKR (128 aa). The active-site For Claisen cyclase activity is Ser1962.

The protein localises to the endosome. The catalysed reaction is 6 malonyl-CoA + acetyl-CoA + 6 H(+) = naphtopyrone YWA1 + 6 CO2 + 7 CoA + H2O. Its pathway is pigment biosynthesis; melanin biosynthesis. Its function is as follows. Non-reducing polyketide synthase; part of the gene cluster that mediates the biosynthesis of dihydroxynaphthalene (DHN)-melanin, a bluish-green pigment and a structural component of the conidial wall. The first step of the pathway is the production of the heptaketide naphtopyrone YWA1 by the polyketide synthase alb1 though condensation of acetyl-CoA with malonyl-CoA. The naphtopyrone YWA1 is then converted to the pentaketide 1,3,6,8-tetrahydroxynaphthalene (1,3,6,8-THN) by the heptaketide hydrolyase ayg1 though chain-length shortening. 1,3,6,8-THN is substrate of the hydroxynaphthalene reductase arp2 to yield scytalone. The scytalone dehydratase arp1 then reduces scytalone to 1,3,8-THN. 1,3,8-THN is also substrate of the hydroxynaphthalene reductase arp2 to yield vermelone. Vermelone is further converted by the multicopper oxidase abr1 to 1,8-DHN. Finally the laccase abr2 transforms 1,8-DHN to DHN-melanin. DHN-melanin biosynthesis appears to be initiated in endosomes where early enzymes (abl1, ayg1, arp1 and arp2) localize, with exocytosis leading to melanin deposition on the cell surface where late enzymes (abr1 and abr2) localize. DHN-melanin is an important structural component of the outer cell wall and is required for the presence of conidial surface hydrophobins. DHN-melanin also plays a crucial role in fungal virulence, including a protective role against the host's immune defenses. DHN-melanin protects also conidia against amoeba predation. This is Conidial pigment polyketide synthase alb1 from Aspergillus fumigatus (strain ATCC MYA-4609 / CBS 101355 / FGSC A1100 / Af293) (Neosartorya fumigata).